Consider the following 403-residue polypeptide: Phosphoglycerate kinase (403 aa).

Substrate is bound by residues 21–23 (DFN), Arg-36, 59–62 (HLGR), Arg-119, and Arg-159. ATP contacts are provided by residues Lys-214, Gly-301, Glu-332, and 359–362 (GGDS).

The protein belongs to the phosphoglycerate kinase family. Monomer.

It is found in the cytoplasm. It carries out the reaction (2R)-3-phosphoglycerate + ATP = (2R)-3-phospho-glyceroyl phosphate + ADP. The protein operates within carbohydrate degradation; glycolysis; pyruvate from D-glyceraldehyde 3-phosphate: step 2/5. The chain is Phosphoglycerate kinase from Lactobacillus helveticus (strain DPC 4571).